A 499-amino-acid polypeptide reads, in one-letter code: Glutathione reductase, cytosolic (499 aa).

FAD contacts are provided by Ser35, Gly36, Glu55, Thr72, Cys73, and Lys81. Residue Ser35 coordinates glutathione. Residues Cys73 and Cys78 are joined by a disulfide bond. Tyr130 provides a ligand contact to glutathione. Gly146 contacts FAD. 6 residues coordinate NADP(+): Gly211, Ile214, Glu217, Arg234, Arg240, and Gly297. FAD-binding residues include Asp338 and Thr346. An NADP(+)-binding site is contributed by Ala376. His472 contacts FAD. The Proton acceptor role is filled by His472.

The protein belongs to the class-I pyridine nucleotide-disulfide oxidoreductase family. Homodimer. FAD is required as a cofactor.

It localises to the cytoplasm. It catalyses the reaction 2 glutathione + NADP(+) = glutathione disulfide + NADPH + H(+). Catalyzes the reduction of glutathione disulfide (GSSG) to reduced glutathione (GSH). Constitutes the major mechanism to maintain a high GSH:GSSG ratio in the cytosol. The polypeptide is Glutathione reductase, cytosolic (Arabidopsis thaliana (Mouse-ear cress)).